Here is a 104-residue protein sequence, read N- to C-terminus: UPF0235 protein Paes_1868 (104 aa).

This sequence belongs to the UPF0235 family.

The chain is UPF0235 protein Paes_1868 from Prosthecochloris aestuarii (strain DSM 271 / SK 413).